We begin with the raw amino-acid sequence, 206 residues long: Small ribosomal subunit protein uS4 (206 aa).

In terms of domain architecture, S4 RNA-binding spans 96-156; that stretch reads GRLDNVVYRM…EKSKKQARIK (61 aa).

Belongs to the universal ribosomal protein uS4 family. Part of the 30S ribosomal subunit. Contacts protein S5. The interaction surface between S4 and S5 is involved in control of translational fidelity.

In terms of biological role, one of the primary rRNA binding proteins, it binds directly to 16S rRNA where it nucleates assembly of the body of the 30S subunit. Functionally, with S5 and S12 plays an important role in translational accuracy. The protein is Small ribosomal subunit protein uS4 of Pasteurella multocida (strain Pm70).